The chain runs to 503 residues: Cobyric acid synthase (503 aa).

The region spanning 245 to 447 (DISIAIIRLP…LHGIFDEISL (203 aa)) is the GATase cobBQ-type domain. Cys-326 functions as the Nucleophile in the catalytic mechanism. Residue His-439 is part of the active site.

It belongs to the CobB/CobQ family. CobQ subfamily.

Its pathway is cofactor biosynthesis; adenosylcobalamin biosynthesis. Catalyzes amidations at positions B, D, E, and G on adenosylcobyrinic A,C-diamide. NH(2) groups are provided by glutamine, and one molecule of ATP is hydrogenolyzed for each amidation. In Alkaliphilus metalliredigens (strain QYMF), this protein is Cobyric acid synthase.